A 138-amino-acid polypeptide reads, in one-letter code: Protein PsiE homolog (138 aa).

Transmembrane regions (helical) follow at residues 12-34 (YLLQ…ALLI), 56-76 (YEML…ALII), 84-104 (HFPL…LIII), and 109-129 (AIST…FFIA).

It belongs to the PsiE family.

The protein resides in the cell membrane. The protein is Protein PsiE homolog of Bacillus subtilis (strain 168).